Reading from the N-terminus, the 196-residue chain is Probable thymidylate kinase (196 aa).

Position 8–15 (Gly-8–Thr-15) interacts with ATP.

It belongs to the thymidylate kinase family.

The enzyme catalyses dTMP + ATP = dTDP + ADP. This chain is Probable thymidylate kinase, found in Metallosphaera sedula (strain ATCC 51363 / DSM 5348 / JCM 9185 / NBRC 15509 / TH2).